The primary structure comprises 203 residues: MTKVKICGITTVEDALMAIEAGADALGFVFYDKSPRNIIPERAAEIIGSLPPFIHVVGLFVHAHLDFVNATADRCRLDIVQLHGDESREFCSRVNRRVIKAFRVKDITSLDRMEEYRVAGYLLDAYSPKAFGGTGITFNWDTAVVAKKFGPIILAGGLTPDNVTEAIGHVSPYGVDVSSGVESAPGVKDPAKVREFIKRAKGL.

It belongs to the TrpF family.

The enzyme catalyses N-(5-phospho-beta-D-ribosyl)anthranilate = 1-(2-carboxyphenylamino)-1-deoxy-D-ribulose 5-phosphate. It participates in amino-acid biosynthesis; L-tryptophan biosynthesis; L-tryptophan from chorismate: step 3/5. The chain is N-(5'-phosphoribosyl)anthranilate isomerase from Geotalea uraniireducens (strain Rf4) (Geobacter uraniireducens).